We begin with the raw amino-acid sequence, 164 residues long: Peroxynitrite isomerase 2 (164 aa).

A GXWXGXG motif is present at residues 17 to 23 (GSWAGRG). H155 is a heme b binding site.

It belongs to the nitrobindin family. As to quaternary structure, homodimer. Heme b serves as cofactor.

The catalysed reaction is peroxynitrite = nitrate. The protein operates within nitrogen metabolism. Functionally, heme-binding protein able to scavenge peroxynitrite and to protect free L-tyrosine against peroxynitrite-mediated nitration, by acting as a peroxynitrite isomerase that converts peroxynitrite to nitrate. Therefore, this protein likely plays a role in peroxynitrite sensing and in the detoxification of reactive nitrogen and oxygen species (RNS and ROS, respectively). Is able to bind nitric oxide (NO) in vitro, but may act as a sensor of peroxynitrite levels in vivo. The protein is Peroxynitrite isomerase 2 of Mycobacterium bovis (strain BCG / Pasteur 1173P2).